Here is a 231-residue protein sequence, read N- to C-terminus: LexA repressor (231 aa).

A DNA-binding region (H-T-H motif) is located at residues 31-51; it reads RAEIATEFGFRSANAAEEHLQ. Catalysis depends on for autocatalytic cleavage activity residues S148 and K185.

Belongs to the peptidase S24 family. As to quaternary structure, homodimer.

It catalyses the reaction Hydrolysis of Ala-|-Gly bond in repressor LexA.. In terms of biological role, represses a number of genes involved in the response to DNA damage (SOS response), including recA and lexA. In the presence of single-stranded DNA, RecA interacts with LexA causing an autocatalytic cleavage which disrupts the DNA-binding part of LexA, leading to derepression of the SOS regulon and eventually DNA repair. This is LexA repressor from Leptothrix cholodnii (strain ATCC 51168 / LMG 8142 / SP-6) (Leptothrix discophora (strain SP-6)).